The primary structure comprises 127 residues: Odontogenesis-associated phosphoprotein (127 aa).

The N-terminal stretch at methionine 1–glutamine 23 is a signal peptide.

As to expression, expressed in enamel organs and not expressed in the heart, kidney, or spleen.

It is found in the secreted. In terms of biological role, may promote nucleation of hydroxyapatite. In Rattus norvegicus (Rat), this protein is Odontogenesis-associated phosphoprotein.